The following is a 986-amino-acid chain: Ephrin type-A receptor 4 (986 aa).

The N-terminal stretch at 1–19 (MAGIFYFILFSFLFGICDA) is a signal peptide. The Extracellular portion of the chain corresponds to 20 to 547 (VTGSRVYPAN…RIIGDGANST (528 aa)). Positions 30-209 (EVTLLDSRSV…FYKKCPLTVR (180 aa)) constitute an Eph LBD domain. Asn-235, Asn-340, and Asn-408 each carry an N-linked (GlcNAc...) asparagine glycan. 2 Fibronectin type-III domains span residues 328-439 (PPSA…TNQA) and 440-537 (APSS…TVPS). A helical transmembrane segment spans residues 548–569 (VLLVSVSGSVVLVVILIAAFVI). The Cytoplasmic segment spans residues 570-986 (SRRRSKYSKA…QQMHGRMVPV (417 aa)). Phosphotyrosine; by autocatalysis is present on residues Tyr-596 and Tyr-602. Positions 621–882 (IKIEKVIGVG…QIVNMLDKLI (262 aa)) constitute a Protein kinase domain. Residues 627–635 (IGVGEFGEV) and Lys-653 contribute to the ATP site. Asp-746 acts as the Proton acceptor in catalysis. A phosphotyrosine; by autocatalysis mark is found at Tyr-779 and Tyr-928. In terms of domain architecture, SAM spans 911–975 (SAVVSVGDWL…LSSVQAMRTQ (65 aa)). Positions 984–986 (VPV) match the PDZ-binding motif.

Belongs to the protein kinase superfamily. Tyr protein kinase family. Ephrin receptor subfamily. In terms of assembly, heterotetramer upon binding of the ligand. The heterotetramer is composed of an ephrin dimer and a receptor dimer. Oligomerization is probably required to induce biological responses. Interacts (phosphorylated at position Tyr-602) with FYN. Interacts (via PDZ motif) with SIPA1L1 (via PDZ domain); controls neuronal morphology through regulation of the RAP1 (RAP1A or RAP1B) and RAP2 (RAP2A, RAP2B or RAP2C) GTPases. Interacts with CDK5, CDK5R1 and NGEF; upon activation by EFNA1 induces NGEF phosphorylation by the kinase CDK5. Interacts with CHN1; effector of EPHA4 in axon guidance linking EPHA4 activation to RAC1 regulation. Forms a ternary complex composed of ADAM10, CADH1 and EPHA4; within the complex, CADH1 is cleaved by ADAM10 which disrupts adherens junctions. In terms of tissue distribution, expressed in inner and outer pillar cells of the organ of Corti (at protein level). Highest expression in the adult brain and retina and also detectable in kidney, lung, skeletal muscle and thymus. Not detected in heart and liver. Expressed in myogenic progenitor cells.

It is found in the cell membrane. It localises to the cell projection. Its subcellular location is the axon. The protein resides in the dendrite. The protein localises to the postsynaptic density membrane. It is found in the early endosome. It localises to the cell junction. Its subcellular location is the adherens junction. It carries out the reaction L-tyrosyl-[protein] + ATP = O-phospho-L-tyrosyl-[protein] + ADP + H(+). Receptor tyrosine kinase which binds membrane-bound ephrin family ligands residing on adjacent cells, leading to contact-dependent bidirectional signaling into neighboring cells. The signaling pathway downstream of the receptor is referred to as forward signaling while the signaling pathway downstream of the ephrin ligand is referred to as reverse signaling. Highly promiscuous, it has the unique property among Eph receptors to bind and to be physiologically activated by both GPI-anchored ephrin-A and transmembrane ephrin-B ligands including EFNA1 and EFNB3. Upon activation by ephrin ligands, modulates cell morphology and integrin-dependent cell adhesion through regulation of the Rac, Rap and Rho GTPases activity. Plays an important role in the development of the nervous system controlling different steps of axonal guidance including the establishment of the corticospinal projections. May also control the segregation of motor and sensory axons during neuromuscular circuit developmen. In addition to its role in axonal guidance plays a role in synaptic plasticity. Activated by EFNA1 phosphorylates CDK5 at 'Tyr-15' which in turn phosphorylates NGEF regulating RHOA and dendritic spine morphogenesis. In the nervous system, also plays a role in repair after injury preventing axonal regeneration and in angiogenesis playing a role in central nervous system vascular formation. Additionally, its promiscuity makes it available to participate in a variety of cell-cell signaling regulating for instance the development of the thymic epithelium. During development of the cochlear organ of Corti, regulates pillar cell separation by forming a ternary complex with ADAM10 and CADH1 which facilitates the cleavage of CADH1 by ADAM10 and disruption of adherens junctions. Phosphorylates CAPRIN1, promoting CAPRIN1-dependent formation of a membraneless compartment. The polypeptide is Ephrin type-A receptor 4 (Epha4) (Mus musculus (Mouse)).